A 188-amino-acid chain; its full sequence is Peroxiredoxin y4vD (188 aa).

The Thioredoxin domain occupies 2–152; that stretch reads PVKKRVPFVA…VEQWFEEEGF (151 aa). The active-site Cysteine sulfenic acid (-SOH) intermediate (for peroxiredoxin activity) is the Cys56.

It belongs to the peroxiredoxin family. Prx5 subfamily. Monomer.

The catalysed reaction is a hydroperoxide + 2 glutathione = an alcohol + glutathione disulfide + H2O. In terms of biological role, thiol-specific peroxidase that catalyzes the reduction of hydrogen peroxide and organic hydroperoxides to water and alcohols, respectively. Plays a role in cell protection against oxidative stress by detoxifying peroxides. The sequence is that of Peroxiredoxin y4vD from Sinorhizobium fredii (strain NBRC 101917 / NGR234).